Reading from the N-terminus, the 277-residue chain is Indole-3-glycerol phosphate synthase (277 aa).

The protein belongs to the TrpC family.

It carries out the reaction 1-(2-carboxyphenylamino)-1-deoxy-D-ribulose 5-phosphate + H(+) = (1S,2R)-1-C-(indol-3-yl)glycerol 3-phosphate + CO2 + H2O. It functions in the pathway amino-acid biosynthesis; L-tryptophan biosynthesis; L-tryptophan from chorismate: step 4/5. The protein is Indole-3-glycerol phosphate synthase of Pseudomonas putida (strain GB-1).